The following is a 358-amino-acid chain: Tetraacyldisaccharide 4'-kinase (358 aa).

71 to 78 (IAGGAGKT) serves as a coordination point for ATP.

Belongs to the LpxK family.

It carries out the reaction a lipid A disaccharide + ATP = a lipid IVA + ADP + H(+). The protein operates within glycolipid biosynthesis; lipid IV(A) biosynthesis; lipid IV(A) from (3R)-3-hydroxytetradecanoyl-[acyl-carrier-protein] and UDP-N-acetyl-alpha-D-glucosamine: step 6/6. Functionally, transfers the gamma-phosphate of ATP to the 4'-position of a tetraacyldisaccharide 1-phosphate intermediate (termed DS-1-P) to form tetraacyldisaccharide 1,4'-bis-phosphate (lipid IVA). This chain is Tetraacyldisaccharide 4'-kinase, found in Methylibium petroleiphilum (strain ATCC BAA-1232 / LMG 22953 / PM1).